A 178-amino-acid polypeptide reads, in one-letter code: Adenine phosphoribosyltransferase (178 aa).

This sequence belongs to the purine/pyrimidine phosphoribosyltransferase family. Homodimer.

It localises to the cytoplasm. The catalysed reaction is AMP + diphosphate = 5-phospho-alpha-D-ribose 1-diphosphate + adenine. It participates in purine metabolism; AMP biosynthesis via salvage pathway; AMP from adenine: step 1/1. In terms of biological role, catalyzes a salvage reaction resulting in the formation of AMP, that is energically less costly than de novo synthesis. This chain is Adenine phosphoribosyltransferase, found in Streptomyces clavuligerus.